The sequence spans 409 residues: Putative actin-fragmin kinase DDB_G0268812 (409 aa).

The disordered stretch occupies residues 1 to 45; the sequence is MKTFRDFKKKIKNNNNNKNNKNNNINNNNSNNNKNNKNNNNNNSN. Residues 5–46 are a coiled coil; sequence RDFKKKIKNNNNNKNNKNNNINNNNSNNNKNNKNNNNNNSNN. Residues 13 to 45 are compositionally biased toward low complexity; sequence NNNNNKNNKNNNINNNNSNNNKNNKNNNNNNSN.

Belongs to the protein kinase superfamily. AFK Ser/Thr protein kinase family.

This chain is Putative actin-fragmin kinase DDB_G0268812, found in Dictyostelium discoideum (Social amoeba).